Consider the following 234-residue polypeptide: 2-C-methyl-D-erythritol 4-phosphate cytidylyltransferase (234 aa).

Belongs to the IspD/TarI cytidylyltransferase family. IspD subfamily.

It carries out the reaction 2-C-methyl-D-erythritol 4-phosphate + CTP + H(+) = 4-CDP-2-C-methyl-D-erythritol + diphosphate. It functions in the pathway isoprenoid biosynthesis; isopentenyl diphosphate biosynthesis via DXP pathway; isopentenyl diphosphate from 1-deoxy-D-xylulose 5-phosphate: step 2/6. Its function is as follows. Catalyzes the formation of 4-diphosphocytidyl-2-C-methyl-D-erythritol from CTP and 2-C-methyl-D-erythritol 4-phosphate (MEP). This Thermosynechococcus vestitus (strain NIES-2133 / IAM M-273 / BP-1) protein is 2-C-methyl-D-erythritol 4-phosphate cytidylyltransferase.